The chain runs to 128 residues: CD59 glycoprotein (128 aa).

The signal sequence occupies residues 1–25 (MGIQGGSVLFGLLLVLAVFCHSGNS). The UPAR/Ly6 domain maps to 26-108 (LQCYSCPYPT…ALKNGGTTLS (83 aa)). Intrachain disulfides connect C28-C51, C31-C38, C44-C64, C70-C88, and C89-C94. N-linked (GlcNAc...) asparagine glycosylation is present at N43. The GPI-anchor amidated asparagine moiety is linked to residue N102. Residues 103–128 (GGTTLSKKTVLLLVIPFLVAAWSLHP) constitute a propeptide, removed in mature form.

In terms of assembly, interacts with T-cell surface antigen CD2. Post-translationally, N- and O-glycosylated.

It is found in the cell membrane. The protein resides in the secreted. Its function is as follows. Potent inhibitor of the complement membrane attack complex (MAC) action, which protects self-cells from damage during complement activation. Acts by binding to the beta-haipins of C8 (C8A and C8B) components of the assembling MAC, forming an intermolecular beta-sheet that prevents incorporation of the multiple copies of C9 required for complete formation of the osmolytic pore. This chain is CD59 glycoprotein, found in Aotus trivirgatus (Three-striped night monkey).